Reading from the N-terminus, the 53-residue chain is Small polypeptide DEVIL 7 (53 aa).

Positions 1–16 (MREKYTKEEAVKNWEK) are enriched in basic and acidic residues. The tract at residues 1 to 28 (MREKYTKEEAVKNWEKKKNKPSSPKGVG) is disordered. The required for DVL/RTFL small polypeptide activity stretch occupies residues 22–53 (SSPKGVGEFLKKKKGRFYIIGKCITMLLCSHK). Residues 30 to 46 (FLKKKKGRFYIIGKCIT) form a helical membrane-spanning segment.

It belongs to the DVL/RTFL small polypeptides family.

The protein localises to the cell membrane. Small polypeptide acting as a regulatory molecule which coordinates cellular responses required for differentiation, growth and development, probably by restricting polar cell proliferation in lateral organs and coordinating socket cell recruitment and differentiation at trichome sites. In Arabidopsis thaliana (Mouse-ear cress), this protein is Small polypeptide DEVIL 7.